A 311-amino-acid chain; its full sequence is Interleukin-20 receptor subunit beta (311 aa).

The signal sequence occupies residues 1 to 29 (MQTFTMVLEEIWTSLFMWFFYALIPCLLT). At 30 to 233 (DEVAILPAPQ…VEVQGEAIPL (204 aa)) the chain is on the extracellular side. Fibronectin type-III domains follow at residues 37-136 (APQN…RNST) and 144-228 (EITK…EVQG). A glycan (N-linked (GlcNAc...) asparagine) is linked at N40. C89 and C97 are disulfide-bonded. The N-linked (GlcNAc...) asparagine glycan is linked to N134. The cysteines at positions 202 and 223 are disulfide-linked. The helical transmembrane segment at 234–254 (VLALFAFVGFMLILVVVPLFV) threads the bilayer. Residues 255-311 (WKMGRLLQYSCCPVVVLPDTLKITNSPQKLISCRREEVDACATAVMSPEELLRAWIS) lie on the Cytoplasmic side of the membrane.

The protein belongs to the type II cytokine receptor family. Heterodimer with IL20RA and heterodimer with IL22RA1. As to expression, widely expressed with highest levels in skin and testis. Highly expressed in psoriatic skin.

Its subcellular location is the membrane. In terms of biological role, the IL20RA/IL20RB dimer is a receptor for IL19, IL20 and IL24. The IL22RA1/IL20RB dimer is a receptor for IL20 and IL24. This chain is Interleukin-20 receptor subunit beta (IL20RB), found in Homo sapiens (Human).